The chain runs to 109 residues: Ribonuclease (109 aa).

The active-site Proton acceptor is Glu72. Residue His101 is the Proton donor of the active site.

It belongs to the ribonuclease N1/T1 family.

Its subcellular location is the secreted. In terms of biological role, hydrolyzes phosphodiester bonds in RNA, poly- and oligoribonucleotides resulting in 3'-nucleoside monophosphates via 2',3'-cyclophosphate intermediates. The chain is Ribonuclease from Heyndrickxia coagulans (Weizmannia coagulans).